Reading from the N-terminus, the 486-residue chain is NGFI-A-binding protein 1 (486 aa).

The NCD1 stretch occupies residues 4 to 82; the sequence is ALPRTLGELQ…RDWVTNPGLF (79 aa). Glycyl lysine isopeptide (Lys-Gly) (interchain with G-Cter in SUMO2) cross-links involve residues Lys126, Lys129, and Lys143. Residues 160 to 187 form a disordered region; sequence WQGHHATESEHSLSPADLGSPASPKESS. Residues Ser171 and Ser182 each carry the phosphoserine modification. Residue Lys211 forms a Glycyl lysine isopeptide (Lys-Gly) (interchain with G-Cter in SUMO2) linkage. The interval 220–309 is NCD2; that stretch reads LLKNNKKLAK…ARQVSREVTY (90 aa). The interval 306–337 is necessary for nuclear localization; sequence EVTYKYTYRTTRLKCGERDELSPKRIKIEDGF. Residue Ser327 is modified to Phosphoserine. Lys332 is covalently cross-linked (Glycyl lysine isopeptide (Lys-Gly) (interchain with G-Cter in SUMO1); alternate). Lys332 is covalently cross-linked (Glycyl lysine isopeptide (Lys-Gly) (interchain with G-Cter in SUMO2); alternate). Glycyl lysine isopeptide (Lys-Gly) (interchain with G-Cter in SUMO2) cross-links involve residues Lys354, Lys368, and Lys372. The interval 398 to 438 is disordered; it reads RQSSGEQSPDGGLPSDSSDGQGERPLNLRIPSVQNRQPHHF. The segment covering 404–417 has biased composition (low complexity); that stretch reads QSPDGGLPSDSSDG. Position 405 is a phosphoserine (Ser405). Glycyl lysine isopeptide (Lys-Gly) (interchain with G-Cter in SUMO2) cross-links involve residues Lys453, Lys464, and Lys476. Residue Lys479 forms a Glycyl lysine isopeptide (Lys-Gly) (interchain with G-Cter in SUMO1); alternate linkage. Lys479 is covalently cross-linked (Glycyl lysine isopeptide (Lys-Gly) (interchain with G-Cter in SUMO2); alternate).

The protein belongs to the NAB family. In terms of assembly, homomultimers may associate with EGR1 bound to DNA. As to expression, widely expressed in adult. In day 16 embryo highest levels in forebrain, thymus, salivary gland and cartilage.

It localises to the nucleus. Acts as a transcriptional repressor for zinc finger transcription factors EGR1 and EGR2. The protein is NGFI-A-binding protein 1 (Nab1) of Mus musculus (Mouse).